The following is a 224-amino-acid chain: UPF0758 protein Noc_0236 (224 aa).

The region spanning 102-224 is the MPN domain; the sequence is VLTDPQTTQR…TLSFAERGLL (123 aa). 3 residues coordinate Zn(2+): His-173, His-175, and Asp-186. The short motif at 173–186 is the JAMM motif element; the sequence is HNHPSGVAEPSRAD.

It belongs to the UPF0758 family.

This is UPF0758 protein Noc_0236 from Nitrosococcus oceani (strain ATCC 19707 / BCRC 17464 / JCM 30415 / NCIMB 11848 / C-107).